The primary structure comprises 120 residues: Large ribosomal subunit protein uL22 (120 aa).

Residues 1–22 form a disordered region; it reads MLVNRRYTAKGKNLPSSPKKVR.

The protein belongs to the universal ribosomal protein uL22 family. Part of the 50S ribosomal subunit.

Functionally, this protein binds specifically to 23S rRNA; its binding is stimulated by other ribosomal proteins, e.g. L4, L17, and L20. It is important during the early stages of 50S assembly. It makes multiple contacts with different domains of the 23S rRNA in the assembled 50S subunit and ribosome. Its function is as follows. The globular domain of the protein is located near the polypeptide exit tunnel on the outside of the subunit, while an extended beta-hairpin is found that lines the wall of the exit tunnel in the center of the 70S ribosome. This is Large ribosomal subunit protein uL22 from Borreliella burgdorferi (strain ATCC 35210 / DSM 4680 / CIP 102532 / B31) (Borrelia burgdorferi).